A 208-amino-acid polypeptide reads, in one-letter code: MRGIVTIDGPSASGKSSVARRVAAALGVPYLSSGLLYRAAAFLALRAGVDPGDEEGLLALLEGLGVRLLAQAEGNRVLADGEDLTPFLHTPEVDRVVSAVARLPGVRAWVNRRLKEVPPPFVAEGRDMGTAVFPEAAHKFYLTASPEVRAWRRARERPQAYEEVLRDLLRRDERDKAQSAPAPDALVLDTGGMTLDEVVAWVLAHIRR.

9 to 17 (GPSASGKSS) contacts ATP.

This sequence belongs to the cytidylate kinase family. Type 1 subfamily.

It localises to the cytoplasm. It carries out the reaction CMP + ATP = CDP + ADP. The catalysed reaction is dCMP + ATP = dCDP + ADP. The polypeptide is Cytidylate kinase (Thermus thermophilus (strain ATCC BAA-163 / DSM 7039 / HB27)).